A 250-amino-acid polypeptide reads, in one-letter code: 3-deoxy-manno-octulosonate cytidylyltransferase (250 aa).

It belongs to the KdsB family.

The protein resides in the cytoplasm. It carries out the reaction 3-deoxy-alpha-D-manno-oct-2-ulosonate + CTP = CMP-3-deoxy-beta-D-manno-octulosonate + diphosphate. Its pathway is nucleotide-sugar biosynthesis; CMP-3-deoxy-D-manno-octulosonate biosynthesis; CMP-3-deoxy-D-manno-octulosonate from 3-deoxy-D-manno-octulosonate and CTP: step 1/1. It participates in bacterial outer membrane biogenesis; lipopolysaccharide biosynthesis. In terms of biological role, activates KDO (a required 8-carbon sugar) for incorporation into bacterial lipopolysaccharide in Gram-negative bacteria. In Francisella tularensis subsp. novicida (strain U112), this protein is 3-deoxy-manno-octulosonate cytidylyltransferase.